A 398-amino-acid chain; its full sequence is Phosphoglycerate kinase (398 aa).

Substrate-binding positions include Asp-21–Asn-23, Arg-36, His-59–Arg-62, Arg-119, and Arg-157. ATP is bound by residues Lys-208, Gly-296, Glu-327, and Gly-354–Ser-357.

Belongs to the phosphoglycerate kinase family. As to quaternary structure, monomer.

The protein resides in the cytoplasm. The enzyme catalyses (2R)-3-phosphoglycerate + ATP = (2R)-3-phospho-glyceroyl phosphate + ADP. It functions in the pathway carbohydrate degradation; glycolysis; pyruvate from D-glyceraldehyde 3-phosphate: step 2/5. The chain is Phosphoglycerate kinase from Streptococcus uberis (strain ATCC BAA-854 / 0140J).